The chain runs to 623 residues: Glutathione import ATP-binding protein GsiA (623 aa).

ABC transporter domains lie at 15–269 (VENL…RALL) and 314–564 (LRVR…RKLL). Residues 49-56 (GESGSGKS) and 357-364 (GESGSGKS) contribute to the ATP site.

Belongs to the ABC transporter superfamily. Glutathione importer (TC 3.A.1.5.11) family. As to quaternary structure, the complex is composed of two ATP-binding proteins (GsiA), two transmembrane proteins (GsiC and GsiD) and a solute-binding protein (GsiB).

The protein localises to the cell inner membrane. It carries out the reaction glutathione(out) + ATP + H2O = glutathione(in) + ADP + phosphate + H(+). Part of the ABC transporter complex GsiABCD involved in glutathione import. Responsible for energy coupling to the transport system. The polypeptide is Glutathione import ATP-binding protein GsiA (Shigella sonnei (strain Ss046)).